The primary structure comprises 311 residues: Pyrimidine-specific ribonucleoside hydrolase RihA (311 aa).

The active site involves His240.

It belongs to the IUNH family. RihA subfamily.

Its function is as follows. Hydrolyzes cytidine or uridine to ribose and cytosine or uracil, respectively. The protein is Pyrimidine-specific ribonucleoside hydrolase RihA of Salmonella dublin (strain CT_02021853).